The sequence spans 805 residues: Transforming acidic coiled-coil-containing protein 1 (805 aa).

The residue at position 2 (alanine 2) is an N-acetylalanine. Alanine 2 carries the N-myristoyl glycine lipid modification. The segment at 2-55 (AFSPWQILSPVQWAKWTWSAVRGGAAGEDEAGGPEGDPEEEDSQAETKSLSFSS) is interaction with LSM7 and SNRPG. A phosphoserine mark is found at serine 4, serine 10, and serine 44. Positions 23-140 (RGGAAGEDEA…SVKNFREEPE (118 aa)) are disordered. Positions 28-45 (GEDEAGGPEGDPEEEDSQ) are enriched in acidic residues. Polar residues-rich tracts occupy residues 47–60 (ETKSLSFSSDSEGN) and 111–128 (SKTCSKPSENEVPQQAID). Over residues 130-140 (HSVKNFREEPE) the composition is skewed to basic and acidic residues. Residues serine 147 and serine 153 each carry the phosphoserine modification. Positions 152–259 (FSIETKDSTD…TNAAVEGTPL (108 aa)) are interaction with TDRD7. The interaction with YEATS4 stretch occupies residues 206-427 (EASAEADLKA…DPDNFDESMD (222 aa)). 2 SPAZ domains span residues 215–297 (AGNS…TPGT) and 359–507 (SKSA…TDEE). Residues 215-457 (AGNSCPELVP…VNEILESPKK (243 aa)) form a disordered region. The Bipartite nuclear localization signal 1 signature appears at 226 to 241 (RRSKLRKPKPVPLRKK). Basic residues predominate over residues 226-242 (RRSKLRKPKPVPLRKKA). Position 228 is a phosphoserine; by AURKC (serine 228). Serine 248 and serine 276 each carry phosphoserine. Composition is skewed to polar residues over residues 296–305 (GTLSSDTNDS), 377–413 (LSQTSSKPDPSQWESPSFNPFGSHSVLQNSPPLSSEG), and 431–447 (PTTTLTSSDFCSPTGNH). A phosphoserine mark is found at serine 381 and serine 406. Positions 455-471 (PKKAKSRLITSGCKVKK) match the Bipartite nuclear localization signal 2 motif. Serine 483 is subject to Phosphoserine. The segment at 493-526 (ISDISNRDGHATDEEKLASTSCGQKSAGAEVKGE) is disordered. A compositionally biased stretch (basic and acidic residues) spans 497–509 (SNRDGHATDEEKL). Tyrosine 533 bears the Phosphotyrosine mark. At serine 591 the chain carries Phosphoserine. Residues 610–805 (IREEIITKEI…ELIAKLGKTD (196 aa)) adopt a coiled-coil conformation. The interaction with CH-TOG stretch occupies residues 701–805 (VLEGFKKNEE…ELIAKLGKTD (105 aa)).

The protein belongs to the TACC family. In terms of assembly, interacts with KIAA0097/CH-TOG and with the oncogenic transcription factor YEATS4. Interacts with AURKA, AURKB and AURKC. Interacts with LSM7, TDRD7 and SNRPG. Interacts with GCN5L2 and PCAF. Interacts with the thyroid hormone receptors THRB and THRA, predominantly with isoform alpha-2. The interaction with THRA isoform alpha-1 and THRB is decreased in the presence of thyroid hormone T3. Also interacts with other nuclear receptors, including ESR1, NR3C1, PPARG, RARA and RXRA, preferentially in the absence of their hormonal ligands. Post-translationally, isoform 1 is heavily phosphorylated; isoform 6 is not. As to expression, isoform 1, isoform 3 and isoform 5 are ubiquitous. Isoform 2 is strongly expressed in the brain, weakly detectable in lung and colon, and overexpressed in gastric cancer. Isoform 4 is not detected in normal tissues, but strong expression was found in gastric cancer tissues. Down-regulated in a subset of cases of breast cancer.

It localises to the cytoplasm. It is found in the nucleus. The protein localises to the cytoskeleton. The protein resides in the microtubule organizing center. Its subcellular location is the centrosome. It localises to the midbody. It is found in the membrane. Involved in transcription regulation induced by nuclear receptors, including in T3 thyroid hormone and all-trans retinoic acid pathways. Might promote the nuclear localization of the receptors. Likely involved in the processes that promote cell division prior to the formation of differentiated tissues. The sequence is that of Transforming acidic coiled-coil-containing protein 1 (TACC1) from Homo sapiens (Human).